Reading from the N-terminus, the 137-residue chain is Global transcriptional regulator Spx (137 aa).

Cysteine 10 and cysteine 13 form a disulfide bridge.

The protein belongs to the ArsC family. Spx subfamily. In terms of assembly, interacts with the C-terminal domain of the alpha subunit of the RNAP.

The protein resides in the cytoplasm. In terms of biological role, global transcriptional regulator that plays a key role in stress response and exerts either positive or negative regulation of genes. Acts by interacting with the C-terminal domain of the alpha subunit of the RNA polymerase (RNAP). This interaction can enhance binding of RNAP to the promoter region of target genes and stimulate their transcription, or block interaction of RNAP with activator. In Streptococcus agalactiae serotype III (strain NEM316), this protein is Global transcriptional regulator Spx.